Reading from the N-terminus, the 251-residue chain is uncharacterized protein (251 aa).

An N-acetyltransferase domain is found at 4–152; it reads IEITKDNIED…YFQLMALTWN (149 aa).

Belongs to the acetyltransferase family.

This is an uncharacterized protein from Bacillus subtilis (strain 168).